A 389-amino-acid polypeptide reads, in one-letter code: tRNA-specific 2-thiouridylase MnmA (389 aa).

Residues 21–28 (AMSGGVDS) and L47 contribute to the ATP site. The active-site Nucleophile is C115. A disulfide bridge links C115 with C212. G139 is an ATP binding site. The segment at 162–164 (RDQ) is interaction with tRNA. The Cysteine persulfide intermediate role is filled by C212.

This sequence belongs to the MnmA/TRMU family.

It is found in the cytoplasm. It carries out the reaction S-sulfanyl-L-cysteinyl-[protein] + uridine(34) in tRNA + AH2 + ATP = 2-thiouridine(34) in tRNA + L-cysteinyl-[protein] + A + AMP + diphosphate + H(+). Catalyzes the 2-thiolation of uridine at the wobble position (U34) of tRNA, leading to the formation of s(2)U34. The chain is tRNA-specific 2-thiouridylase MnmA from Xanthobacter autotrophicus (strain ATCC BAA-1158 / Py2).